Here is a 320-residue protein sequence, read N- to C-terminus: Uridine phosphorylase 2 (320 aa).

Phosphate contacts are provided by residues Gly66, Arg100, and 144–147 (RIGT). An intrachain disulfide couples Cys95 to Cys102. Uridine is bound by residues 148-149 (SG) and 223-225 (QGR).

The protein belongs to the PNP/UDP phosphorylase family. In terms of assembly, homodimer. Liver specific.

The catalysed reaction is uridine + phosphate = alpha-D-ribose 1-phosphate + uracil. It catalyses the reaction 2'-deoxyuridine + phosphate = 2-deoxy-alpha-D-ribose 1-phosphate + uracil. The protein operates within pyrimidine metabolism; UMP biosynthesis via salvage pathway; uracil from uridine (phosphorylase route): step 1/1. Its activity is regulated as follows. A conditional disulfide bridge can form within the protein that dislocates a critical phosphate-coordinating arginine Arg-100 away from the active site, disabling the enzyme. Catalyzes the reversible phosphorylytic cleavage of uridine to uracil and ribose-1-phosphate which can then be utilized as carbon and energy sources or in the rescue of pyrimidine bases for nucleotide synthesis. Shows broad substrate specificity and can also accept deoxyuridine and other analogous compounds. The protein is Uridine phosphorylase 2 of Mus musculus (Mouse).